The sequence spans 790 residues: Kinesin-like protein KIF9 (790 aa).

One can recognise a Kinesin motor domain in the interval 6-340 (KVHAFVRVKP…LRFASRMKLV (335 aa)). Residues 12–14 (RVK) and 93–100 (GQTGAGKT) contribute to the ATP site. Positions 342–380 (TEPAINEKYDAERMVKNLEKELALLKQELAIHDSLTNRT) form a coiled coil. Residues 477 to 578 (QNFGLGVAPF…IRPDTPPSKP (102 aa)) are disordered. Residues 525 to 534 (VSTSKTQLVP) show a composition bias toward polar residues. Threonine 530 carries the post-translational modification Phosphothreonine. Basic and acidic residues-rich tracts occupy residues 537-552 (KDGD…RETS) and 561-570 (SPKEELRPIR). Serine 546 carries the phosphoserine modification. The stretch at 658–690 (LLILKLKDLKKQYRSEYQDLRDLRAEIQYCQHL) forms a coiled coil.

It belongs to the TRAFAC class myosin-kinesin ATPase superfamily. Kinesin family. As to quaternary structure, interacts with HYDIN.

It is found in the cytoplasm. It localises to the cytoskeleton. The protein localises to the cell projection. Its subcellular location is the cilium. The protein resides in the flagellum. It is found in the flagellum axoneme. Functionally, essential for normal male fertility and for progressive motility of spermatozoa. The sequence is that of Kinesin-like protein KIF9 (KIF9) from Homo sapiens (Human).